The sequence spans 447 residues: Mannose/glucose-specific lectin (447 aa).

Jacalin-type lectin domains follow at residues 5 to 148, 153 to 294, and 300 to 443; these read MISV…FVKP, TISF…YVKP, and SISI…FVKP.

Belongs to the jacalin lectin family. As to expression, expressed in seeds (at protein level).

With respect to regulation, hemagglutinating activity is slightly inhibited by alpha-methyl-D-mannopyranoside. D-mannose/D-glucose-binding lectin that also binds derivatives N-acetyl-D-glucosamine and alpha-methyl-D-mannopyranoside. Does not bind D-galactose, L-Rhamnose, D-fructose, lactose or glycoproteins fetiun and mucin. Shows agglutinating activity towards human and rabbit erythrocytes. Also displays antimicrobial activity against L.infantum. This chain is Mannose/glucose-specific lectin, found in Parkia pendula (Inga pendula).